Reading from the N-terminus, the 461-residue chain is Phosphoglucosamine mutase (461 aa).

S107 serves as the catalytic Phosphoserine intermediate. Residues S107, D254, D256, and D258 each contribute to the Mg(2+) site. The residue at position 107 (S107) is a Phosphoserine.

Belongs to the phosphohexose mutase family. Requires Mg(2+) as cofactor. In terms of processing, activated by phosphorylation.

The catalysed reaction is alpha-D-glucosamine 1-phosphate = D-glucosamine 6-phosphate. In terms of biological role, catalyzes the conversion of glucosamine-6-phosphate to glucosamine-1-phosphate. In Bifidobacterium longum subsp. infantis (strain ATCC 15697 / DSM 20088 / JCM 1222 / NCTC 11817 / S12), this protein is Phosphoglucosamine mutase.